We begin with the raw amino-acid sequence, 178 residues long: Protamine-like protein (178 aa).

2 disordered regions span residues 1–27 and 77–178; these read PSTTSSKSPKRRAKSPRRKRTGPTVSD and SVVK…RAKK. 2 stretches are compositionally biased toward basic residues: residues 8 to 21 and 94 to 178; these read SPKRRAKSPRRKRT and PRRR…RAKK. In terms of domain architecture, H15 spans 21–89; sequence TGPTVSDLIL…KAKGFYKLNK (69 aa).

In terms of tissue distribution, male germ cells.

The protein resides in the nucleus. It localises to the chromosome. Functionally, replaces histones in the chromatin of sperm during the haploid phase of spermatogenesis. Compacts sperm DNA into a highly condensed, stable and inactive complex. This chain is Protamine-like protein, found in Mullus surmuletus (Striped red mullet).